Reading from the N-terminus, the 401-residue chain is MKITQLPQEFIDAQPILTKLEDAGFEAYFVGGSVRDTMLGKTIHDVDIASSAFPEEVKSLFHNTVDTGIQHGTVMVLDHGTGYEITTFRVESTYTDFRRPDHVTFVRSLEEDLKRRDFTINALAMRHDGEVLDLFDGLEDMKKGVIRAVGDAEKRFTEDALRMMRALRFSAQLGFNIEADTQKALVDLAPNLAKIAVERVRVEFEKLLLGSQASQSLELALRDQVMNYLPGPHIEDWSSIIDDLNKDQATNYTVAWAHILSRTQFDDKKRRQFMYDWKMSRNVMKTVNAIVPIVHNPKKSTVFDIYQVLAYQEELLEVLSLTGSQPETIQRISHIIEMLPITKAADLNISGGELIRSGILTPGPLLGRVLKKIEYAVVVGDILNDHDALEKFAKEYVNDQN.

ATP is bound by residues glycine 32 and arginine 35. Glycine 32 and arginine 35 together coordinate CTP. Mg(2+) is bound by residues aspartate 45 and aspartate 47. ATP contacts are provided by arginine 116, aspartate 159, arginine 162, arginine 165, and arginine 168. Arginine 116, aspartate 159, arginine 162, arginine 165, and arginine 168 together coordinate CTP.

The protein belongs to the tRNA nucleotidyltransferase/poly(A) polymerase family. Bacterial CCA-adding enzyme type 3 subfamily. As to quaternary structure, homodimer. Mg(2+) serves as cofactor.

It catalyses the reaction a tRNA precursor + 2 CTP + ATP = a tRNA with a 3' CCA end + 3 diphosphate. The enzyme catalyses a tRNA with a 3' CCA end + 2 CTP + ATP = a tRNA with a 3' CCACCA end + 3 diphosphate. Its function is as follows. Catalyzes the addition and repair of the essential 3'-terminal CCA sequence in tRNAs without using a nucleic acid template. Adds these three nucleotides in the order of C, C, and A to the tRNA nucleotide-73, using CTP and ATP as substrates and producing inorganic pyrophosphate. tRNA 3'-terminal CCA addition is required both for tRNA processing and repair. Also involved in tRNA surveillance by mediating tandem CCA addition to generate a CCACCA at the 3' terminus of unstable tRNAs. While stable tRNAs receive only 3'-terminal CCA, unstable tRNAs are marked with CCACCA and rapidly degraded. This Leuconostoc mesenteroides subsp. mesenteroides (strain ATCC 8293 / DSM 20343 / BCRC 11652 / CCM 1803 / JCM 6124 / NCDO 523 / NBRC 100496 / NCIMB 8023 / NCTC 12954 / NRRL B-1118 / 37Y) protein is CCA-adding enzyme.